A 104-amino-acid chain; its full sequence is Small ribosomal subunit protein bS18c (104 aa).

The tract at residues 84–104 (DKQFERSESTPRTIGLRTRNK) is disordered.

It belongs to the bacterial ribosomal protein bS18 family. As to quaternary structure, part of the 30S ribosomal subunit.

The protein resides in the plastid. It is found in the chloroplast. The sequence is that of Small ribosomal subunit protein bS18c from Cucumis sativus (Cucumber).